The sequence spans 161 residues: Cuticle protein 16.8 (161 aa).

Glutamine 1 is modified (pyrrolidone carboxylic acid). Residues 1-10 (QSEPAGPPQP) are compositionally biased toward pro residues. Disordered stretches follow at residues 1–44 (QSEP…YSYT) and 67–103 (ETNE…PAKP). The Chitin-binding type R&amp;R domain occupies 8-74 (PQPYTFSYDN…TVETNEPGTK (67 aa)). Positions 67-86 (ETNEPGTKTSNPADAQIVSN) are enriched in polar residues. Residues 87-103 (AATDSYSPSPASSPAKP) show a composition bias toward low complexity.

Functionally, component of the cuticle of the tick. Binds chitin. This chain is Cuticle protein 16.8, found in Ixodes ricinus (Common tick).